We begin with the raw amino-acid sequence, 210 residues long: MTTLETLKWDGKKVGKVSIDLKVAKETSSSDLIHRAVLRQLANQRQGTASTLTRSEVRGGGRKPYKQKGTGRARQGSIRTPLRPGGGVIFGPKPRSYNLDMNRKERRLALRTALMSRVDDIKAVEDFGSTLNQPKTSEIINGLSRLGIEKTEKVLVILDSPSEVIKKSINNIAKVKLIAADQLNVFDILNANKLVIGQSAINKIQEVYAS.

Positions 44–54 are enriched in polar residues; that stretch reads QRQGTASTLTR. The tract at residues 44–96 is disordered; it reads QRQGTASTLTRSEVRGGGRKPYKQKGTGRARQGSIRTPLRPGGGVIFGPKPRS. The segment covering 60–71 has biased composition (basic residues); the sequence is GGRKPYKQKGTG.

It belongs to the universal ribosomal protein uL4 family. In terms of assembly, part of the 50S ribosomal subunit.

Its function is as follows. One of the primary rRNA binding proteins, this protein initially binds near the 5'-end of the 23S rRNA. It is important during the early stages of 50S assembly. It makes multiple contacts with different domains of the 23S rRNA in the assembled 50S subunit and ribosome. In terms of biological role, forms part of the polypeptide exit tunnel. This chain is Large ribosomal subunit protein uL4, found in Prochlorococcus marinus (strain MIT 9515).